A 491-amino-acid polypeptide reads, in one-letter code: Transcription factor unc-3 (491 aa).

The interval 66–69 (RKSN) is interaction with DNA. The C5-type zinc-finger motif lies at 154 to 173 (CRVLLTHEVMCSRCCEKKSC). Interaction with DNA regions lie at residues 200–207 (NCLKNAGN) and 239–242 (NNSK). The interval 240–261 (NSKHGRRTKRTDASDDSEYSES) is disordered. The 87-residue stretch at 269–355 (PVIKALFPSE…SRGTPLRFSY (87 aa)) folds into the IPT/TIG domain.

This sequence belongs to the COE family. May homodimerise. Interacts with jmjd-3.1. May interact with GFI1 homolog pag-3.

It is found in the nucleus. Its function is as follows. Transcription factor. Involved in motor neuron fate determination and maintenance, acting as an activator of gene expression in a subset of motor neurons. May act in concert with GFI1 homolog pag-3 in motor neuron fate determination. Required to maintain the expression of transcriptional repressors bnc-1 and cfi-1, which play roles in the cell fate of motor neurons. May play a role in the expression of proteins essential for axonal pathfinding and/or neuronal differentiation in both sensory and motor neurons. Cooperates with jmjd-3.1 and wdr-5.1 to ensure robust transdifferentiation of the Y rectal cell to the PDA motor neuron during larval development. The sequence is that of Transcription factor unc-3 (unc-3) from Caenorhabditis elegans.